The sequence spans 261 residues: Calbindin (261 aa).

Ala2 bears the N-acetylalanine mark. Residues 2–7 form an interaction with RANBP9 region; that stretch reads AESHLQ. EF-hand domains follow at residues 11–46, 53–88, 98–133, 142–177, and 186–221; these read ITAS…LLQA, ELSP…EENF, KSCE…LLEK, KLAE…QENF, and MCGK…LCEK. Residues Asp24, Asp26, Ser28, Tyr30, and Glu35 each coordinate Ca(2+). Asp111, Asp113, Ser115, Glu122, Asp155, Asn157, Asp159, Lys161, Glu166, Asp199, Asp201, Asn203, Tyr205, and Glu210 together coordinate Ca(2+).

This sequence belongs to the calbindin family. As to quaternary structure, interacts with RANBP9.

Its function is as follows. Buffers cytosolic calcium. May stimulate a membrane Ca(2+)-ATPase and a 3',5'-cyclic nucleotide phosphodiesterase. The sequence is that of Calbindin (Calb1) from Rattus norvegicus (Rat).